Here is a 145-residue protein sequence, read N- to C-terminus: AN1-type zinc finger protein 2A (145 aa).

AN1-type zinc fingers lie at residues 4–52 (PDLG…QKDV) and 94–142 (KIFT…RPTI). The Zn(2+) site is built by C10, C15, C25, C28, C33, H36, H42, C44, C100, C105, C115, C118, C123, H126, H132, and C134.

Its subcellular location is the cytoplasm. The protein resides in the nucleus. This Homo sapiens (Human) protein is AN1-type zinc finger protein 2A (ZFAND2A).